A 137-amino-acid chain; its full sequence is Probable histone H2AXa (137 aa).

Gly residues predominate over residues 1 to 10 (MSSSQGGGGR). Residues 1–21 (MSSSQGGGGRGKAKTTKAVSR) are disordered. Serine 134 carries the phosphoserine; by ATM and ATR modification. The [ST]-Q motif motif lies at 134–135 (SQ).

Belongs to the histone H2A family. In terms of assembly, the nucleosome is a histone octamer containing two molecules each of H2A, H2B, H3 and H4 assembled in one H3-H4 heterotetramer and two H2A-H2B heterodimers. The octamer wraps approximately 147 bp of DNA. Interacts with numerous proteins required for DNA damage signaling and repair when phosphorylated on Ser-134. Post-translationally, phosphorylated to form H2AXS139ph (gamma-H2AX) in response to DNA double strand breaks (DSBs) generated by exogenous genotoxic agents and by stalled replication forks, and may also occur during meiotic recombination events. Phosphorylation can extend up to several thousand nucleosomes from the actual site of the DSB and may mark the surrounding chromatin for recruitment of proteins required for DNA damage signaling and repair. Widespread phosphorylation may also serve to amplify the damage signal or aid repair of persistent lesions. H2AXS139ph in response to ionizing radiation is mediated by ATM while defects in DNA replication induce H2AXS139ph subsequent to activation of ATR. Dephosphorylation of H2AXS139ph by PP2A is required for DNA DSB repair.

It localises to the nucleus. It is found in the chromosome. In terms of biological role, variant histone H2A which replaces conventional H2A in a subset of nucleosomes. Nucleosomes wrap and compact DNA into chromatin, limiting DNA accessibility to the cellular machineries which require DNA as a template. Histones thereby play a central role in transcription regulation, DNA repair, DNA replication and chromosomal stability. DNA accessibility is regulated via a complex set of post-translational modifications of histones, also called histone code, and nucleosome remodeling. Required for checkpoint-mediated arrest of cell cycle progression in response to low doses of ionizing radiation and for efficient repair of DNA double strand breaks (DSBs) specifically when modified by C-terminal phosphorylation. In Oryza sativa subsp. indica (Rice), this protein is Probable histone H2AXa.